The chain runs to 185 residues: Ribosome-recycling factor (185 aa).

The protein belongs to the RRF family.

The protein resides in the cytoplasm. Functionally, responsible for the release of ribosomes from messenger RNA at the termination of protein biosynthesis. May increase the efficiency of translation by recycling ribosomes from one round of translation to another. This Haemophilus influenzae (strain ATCC 51907 / DSM 11121 / KW20 / Rd) protein is Ribosome-recycling factor.